Consider the following 192-residue polypeptide: NADH-quinone oxidoreductase subunit B (192 aa).

[4Fe-4S] cluster contacts are provided by Cys71, Cys72, Cys136, and Cys166.

Belongs to the complex I 20 kDa subunit family. In terms of assembly, NDH-1 is composed of 14 different subunits. Subunits NuoB, C, D, E, F, and G constitute the peripheral sector of the complex. [4Fe-4S] cluster serves as cofactor.

The protein localises to the cell inner membrane. The catalysed reaction is a quinone + NADH + 5 H(+)(in) = a quinol + NAD(+) + 4 H(+)(out). NDH-1 shuttles electrons from NADH, via FMN and iron-sulfur (Fe-S) centers, to quinones in the respiratory chain. The immediate electron acceptor for the enzyme in this species is believed to be ubiquinone. Couples the redox reaction to proton translocation (for every two electrons transferred, four hydrogen ions are translocated across the cytoplasmic membrane), and thus conserves the redox energy in a proton gradient. The polypeptide is NADH-quinone oxidoreductase subunit B (Sinorhizobium medicae (strain WSM419) (Ensifer medicae)).